Here is a 176-residue protein sequence, read N- to C-terminus: Inner membrane-spanning protein YciB (176 aa).

The next 5 helical transmembrane spans lie at 3–23, 49–69, 72–92, 118–138, and 149–169; these read FLFD…WGIF, TMLW…LVLH, KFIQ…LVAA, KLNL…LYVV, and FKLF…SLWL.

Belongs to the YciB family.

The protein resides in the cell inner membrane. Its function is as follows. Plays a role in cell envelope biogenesis, maintenance of cell envelope integrity and membrane homeostasis. This Burkholderia mallei (strain NCTC 10247) protein is Inner membrane-spanning protein YciB.